A 137-amino-acid polypeptide reads, in one-letter code: Nucleoside diphosphate kinase (137 aa).

Residues Lys11, Phe59, Arg87, Thr93, Arg104, and Asn114 each coordinate ATP. Residue His117 is the Pros-phosphohistidine intermediate of the active site.

The protein belongs to the NDK family. As to quaternary structure, homotetramer. Mg(2+) serves as cofactor.

The protein localises to the cytoplasm. The catalysed reaction is a 2'-deoxyribonucleoside 5'-diphosphate + ATP = a 2'-deoxyribonucleoside 5'-triphosphate + ADP. It catalyses the reaction a ribonucleoside 5'-diphosphate + ATP = a ribonucleoside 5'-triphosphate + ADP. Functionally, major role in the synthesis of nucleoside triphosphates other than ATP. The ATP gamma phosphate is transferred to the NDP beta phosphate via a ping-pong mechanism, using a phosphorylated active-site intermediate. The chain is Nucleoside diphosphate kinase from Frankia casuarinae (strain DSM 45818 / CECT 9043 / HFP020203 / CcI3).